The primary structure comprises 276 residues: Large ribosomal subunit protein uL2 (276 aa).

A disordered region spans residues 224–258; sequence VAMNPVDHPHGGGEGRTGEGRVPVSPWGTPTKGYR. A compositionally biased stretch (basic and acidic residues) spans 230–242; it reads DHPHGGGEGRTGE.

Belongs to the universal ribosomal protein uL2 family. As to quaternary structure, part of the 50S ribosomal subunit. Forms a bridge to the 30S subunit in the 70S ribosome.

In terms of biological role, one of the primary rRNA binding proteins. Required for association of the 30S and 50S subunits to form the 70S ribosome, for tRNA binding and peptide bond formation. It has been suggested to have peptidyltransferase activity; this is somewhat controversial. Makes several contacts with the 16S rRNA in the 70S ribosome. The sequence is that of Large ribosomal subunit protein uL2 from Polynucleobacter necessarius subsp. necessarius (strain STIR1).